The sequence spans 325 residues: Adenine deaminase (325 aa).

Zn(2+) contacts are provided by His-8, His-10, and His-186. The Proton donor role is filled by Glu-189. Asp-267 is a Zn(2+) binding site. Substrate is bound at residue Asp-268.

This sequence belongs to the metallo-dependent hydrolases superfamily. Adenosine and AMP deaminases family. Adenine deaminase type 2 subfamily. Zn(2+) is required as a cofactor.

It carries out the reaction adenine + H2O + H(+) = hypoxanthine + NH4(+). Catalyzes the hydrolytic deamination of adenine to hypoxanthine. Plays an important role in the purine salvage pathway and in nitrogen catabolism. In Chelativorans sp. (strain BNC1), this protein is Adenine deaminase.